Here is a 265-residue protein sequence, read N- to C-terminus: MGSFLFLIVVIFLFSSSVNACDRCLHRSKAAYFSSASALSSGACAYGSMATSFFAGHIAAAIPSIYKDGAGCGACFQVRCKNPKLCSTKGTIVMITDLNKSNQTDLVLSSRAFRAMAKPIVGADKDLLKQGIVDIEYQRVPCDYGNKNMNVRVEEASKKPNYLEIKLLYQGGQTEVVSIDIAQVGSSPNWGYMTRSHGAVWVTDKVPTGAIQFRFVVTGGYDGKMIWSQSVLPSNWEAGKIYDAGVQITDIAQEGCDPCDAHIWN.

The signal sequence occupies residues 1–20 (MGSFLFLIVVIFLFSSSVNA). An Expansin-like EG45 domain is found at 41-147 (SGACAYGSMA…QRVPCDYGNK (107 aa)). A helical membrane pass occupies residues 42 to 62 (GACAYGSMATSFFAGHIAAAI). N-linked (GlcNAc...) asparagine glycosylation is found at Asn-99 and Asn-102. The region spanning 161 to 244 (NYLEIKLLYQ…NWEAGKIYDA (84 aa)) is the Expansin-like CBD domain.

Belongs to the expansin family. Expansin-like A subfamily.

Its subcellular location is the membrane. In Arabidopsis thaliana (Mouse-ear cress), this protein is Expansin-like A1 (EXLA1).